The sequence spans 429 residues: UDP-N-acetylglucosamine 1-carboxyvinyltransferase (429 aa).

A phosphoenolpyruvate-binding site is contributed by 22 to 23; sequence KN. Arg-102 serves as a coordination point for UDP-N-acetyl-alpha-D-glucosamine. Catalysis depends on Cys-126, which acts as the Proton donor. Position 126 is a 2-(S-cysteinyl)pyruvic acid O-phosphothioketal (Cys-126). 2 residues coordinate UDP-N-acetyl-alpha-D-glucosamine: Asp-316 and Ile-338.

This sequence belongs to the EPSP synthase family. MurA subfamily.

Its subcellular location is the cytoplasm. The enzyme catalyses phosphoenolpyruvate + UDP-N-acetyl-alpha-D-glucosamine = UDP-N-acetyl-3-O-(1-carboxyvinyl)-alpha-D-glucosamine + phosphate. Its pathway is cell wall biogenesis; peptidoglycan biosynthesis. In terms of biological role, cell wall formation. Adds enolpyruvyl to UDP-N-acetylglucosamine. In Methylorubrum extorquens (strain PA1) (Methylobacterium extorquens), this protein is UDP-N-acetylglucosamine 1-carboxyvinyltransferase.